Reading from the N-terminus, the 411-residue chain is MFSISRITRTSSFTTQFRALYRFKHSARKLQSIPFSIYKKMSAADRLNQTHDILSESVQAVENPFKVTVIGSGNWGTTISKVVAENAALRPHLFVKRVDMWVFEETVDGQKLTEIINTKHQNVKYLPNIDLPENLVANPDLVSAVKDADILVFNIPHQFLPRIVSQLQGNIKKDARAISCLKGFDVSKDGVKLLSTYVTEKLGITCGALSGANLAPEVAKENWSETTVAYELPKDFKGEGKDVDHAVLKALFHRPYFHVNVIDDVAGISVAGALKNVVALGCGFVEGLGWGNNASAAIQRVGLGEIIKFGQMFFPDSRVETYYQESAGVADLITTCSGGRNVRVATHMAKTGKSAEECEKELLNGQSAQVFTHVRRSTSGWPSAVRPMNSFCSRPFTRLSTRTLLWTLCQT.

Residues 71–76 (GSGNWG), F103, and F159 each bind NAD(+). K182 contacts substrate. A215 lines the NAD(+) pocket. K275 serves as the catalytic Proton acceptor. Residues R340 and Q369 each contribute to the NAD(+) site. Substrate is bound at residue 340–341 (RN).

The protein belongs to the NAD-dependent glycerol-3-phosphate dehydrogenase family.

It carries out the reaction sn-glycerol 3-phosphate + NAD(+) = dihydroxyacetone phosphate + NADH + H(+). The chain is Glycerol-3-phosphate dehydrogenase [NAD(+)] (GPD) from Lachancea thermotolerans (Yeast).